We begin with the raw amino-acid sequence, 143 residues long: Transcriptional regulator MraZ (143 aa).

2 SpoVT-AbrB domains span residues 5–47 (TYTP…PRSE) and 76–119 (TDEQ…DAQA).

This sequence belongs to the MraZ family. As to quaternary structure, forms oligomers.

It is found in the cytoplasm. Its subcellular location is the nucleoid. This Mycobacterium ulcerans (strain Agy99) protein is Transcriptional regulator MraZ.